Reading from the N-terminus, the 608-residue chain is Thiol:disulfide interchange protein DsbD (608 aa).

Positions 1–22 are cleaved as a signal peptide; the sequence is MKNLLSLCFLMLAAFTLNPAAA. Cysteines 135 and 141 form a disulfide. The segment covering 161–173 has biased composition (polar residues); that stretch reads SAPSSDAAQQTNE. The interval 161–180 is disordered; it reads SAPSSDAAQQTNEGEVKKSE. The next 8 helical transmembrane spans lie at 194–214, 241–261, 273–293, 314–334, 352–372, 387–407, 414–434, and 456–476; these read LLTLIAFFVGGLLLSFTPCVF, FFYVQGMAITYTLLGVVVAMA, IVLIGLSILFIFLALSMFGVF, GGSITGVLMMGVISGLVASPC, VVLGASALYALSLGMGLPLLI, WMNIIKNIFGLLLLAVPVFLL, VASQALWALLILVSASYFYVA, and SLVIFLMLFFGANLAYQLIYP. Residues cysteine 212 and cysteine 334 are joined by a disulfide bond. The Thioredoxin domain maps to 469-608; that stretch reads LAYQLIYPSS…FSAHVKSIFK (140 aa). Cysteine 522 and cysteine 525 are oxidised to a cystine.

The protein belongs to the thioredoxin family. DsbD subfamily.

The protein resides in the cell inner membrane. It catalyses the reaction [protein]-dithiol + NAD(+) = [protein]-disulfide + NADH + H(+). The enzyme catalyses [protein]-dithiol + NADP(+) = [protein]-disulfide + NADPH + H(+). Functionally, required to facilitate the formation of correct disulfide bonds in some periplasmic proteins and for the assembly of the periplasmic c-type cytochromes. Acts by transferring electrons from cytoplasmic thioredoxin to the periplasm. This transfer involves a cascade of disulfide bond formation and reduction steps. This chain is Thiol:disulfide interchange protein DsbD, found in Colwellia psychrerythraea (strain 34H / ATCC BAA-681) (Vibrio psychroerythus).